Here is a 111-residue protein sequence, read N- to C-terminus: Large ribosomal subunit protein uL22 (111 aa).

The protein belongs to the universal ribosomal protein uL22 family. In terms of assembly, part of the 50S ribosomal subunit.

This protein binds specifically to 23S rRNA; its binding is stimulated by other ribosomal proteins, e.g. L4, L17, and L20. It is important during the early stages of 50S assembly. It makes multiple contacts with different domains of the 23S rRNA in the assembled 50S subunit and ribosome. In terms of biological role, the globular domain of the protein is located near the polypeptide exit tunnel on the outside of the subunit, while an extended beta-hairpin is found that lines the wall of the exit tunnel in the center of the 70S ribosome. In Mycoplasma mycoides subsp. mycoides SC (strain CCUG 32753 / NCTC 10114 / PG1), this protein is Large ribosomal subunit protein uL22.